The primary structure comprises 506 residues: Protein MGF 505-4R (506 aa).

The protein belongs to the asfivirus MGF 505 family.

Plays a role in virus cell tropism, and may be required for efficient virus replication in macrophages. This chain is Protein MGF 505-4R, found in Ornithodoros (relapsing fever ticks).